Reading from the N-terminus, the 567-residue chain is Glucose-6-phosphate isomerase, cytosolic (567 aa).

The active-site Proton donor is glutamate 360. Catalysis depends on residues histidine 391 and lysine 516.

It belongs to the GPI family. As to quaternary structure, homodimer.

Its subcellular location is the cytoplasm. It catalyses the reaction alpha-D-glucose 6-phosphate = beta-D-fructose 6-phosphate. Its pathway is carbohydrate degradation; glycolysis; D-glyceraldehyde 3-phosphate and glycerone phosphate from D-glucose: step 2/4. The sequence is that of Glucose-6-phosphate isomerase, cytosolic (PHI1) from Zea mays (Maize).